The following is a 584-amino-acid chain: (+)-larreatricin hydroxylase, chloroplastic (584 aa).

A chloroplast-targeting transit peptide spans 1 to 32; the sequence is MASLSSQSKLLATPYSFPYHTKPSRVSLRRVS. Residues 33–79 constitute a thylakoid transit peptide; sequence CKASNDNKDKPNDQEKTFSIDRRNMLIGLGGLYGASNVFPSNQSTLA. Disulfide bonds link C91-C106 and C105-C168. 6 residues coordinate Cu cation: H167, H188, H197, H319, H323, and H353. Positions 171 to 188 form a cross-link, 2'-(S-cysteinyl)-histidine (Cys-His); that stretch reads CNGAYDQVGFPDVNIQVH. Residues 432-584 constitute a propeptide, removed in mature form; sequence RLRSKATTTT…KIEFVRDEED (153 aa).

The protein belongs to the tyrosinase family. It depends on Cu(2+) as a cofactor.

The protein localises to the plastid. It is found in the chloroplast thylakoid lumen. It catalyses the reaction (+)-larreatricin + AH2 + O2 = (+)-3'-hydroxylarreatricin + A + H2O. Its function is as follows. Enantio-specific polyphenol oxidase involved in aromatic ring hydroxylation. Involved in the biosynthesis of the creosote bush 8-8' linked lignans. Has a strong preference for the 3' position of (+)-larreatricin. The protein is (+)-larreatricin hydroxylase, chloroplastic of Larrea tridentata (Creosote bush).